Here is a 438-residue protein sequence, read N- to C-terminus: Aflatoxin cluster transcriptional coactivator aflS (438 aa).

One can recognise an HTH iclR-type domain in the interval 65 to 134; sequence LALYNQLLAC…PSPGHVAHSV (70 aa). The segment at residues 95–114 is a DNA-binding region (H-T-H motif); that stretch reads FEDVADIAGVPECRLRRLVR.

As to quaternary structure, interacts with aflR.

The protein resides in the nucleus. In terms of biological role, transcription factor; part of the gene cluster that mediates the biosynthesis of aflatoxin, a polyketide-derived furanocoumarin which is part of the most toxic and carcinogenic compounds among the known mycotoxins. AflS exhibits no DNA-binding capability on its own, but forms a complex with the other aflatoxin cluster transcription factor aflR and acts as a modulator of aflR's DNA-binding by decreasing its DNA-binding affinity. This chain is Aflatoxin cluster transcriptional coactivator aflS, found in Aspergillus flavus (strain ATCC 200026 / FGSC A1120 / IAM 13836 / NRRL 3357 / JCM 12722 / SRRC 167).